A 350-amino-acid chain; its full sequence is Ion-translocating oxidoreductase complex subunit D (350 aa).

The next 4 helical transmembrane spans lie at tyrosine 37–alanine 57, alanine 68–alanine 88, isoleucine 89–valine 109, and isoleucine 120–threonine 140. Threonine 185 carries the post-translational modification FMN phosphoryl threonine. The next 5 membrane-spanning stretches (helical) occupy residues glycine 212–leucine 232, tryptophan 239–leucine 259, valine 265–threonine 285, alanine 291–isoleucine 311, and glycine 315–isoleucine 335.

It belongs to the NqrB/RnfD family. In terms of assembly, the complex is composed of six subunits: RnfA, RnfB, RnfC, RnfD, RnfE and RnfG. Requires FMN as cofactor.

The protein localises to the cell inner membrane. Its function is as follows. Part of a membrane-bound complex that couples electron transfer with translocation of ions across the membrane. This chain is Ion-translocating oxidoreductase complex subunit D, found in Shewanella pealeana (strain ATCC 700345 / ANG-SQ1).